We begin with the raw amino-acid sequence, 134 residues long: U35-theraphotoxin-Cg1a (134 aa).

Residues 1–18 (MLVTLLETFSVVFQVANG) form the signal peptide. The propeptide occupies 19–56 (DGNCVPRFQDDVEFCDNYILEAVTEASKMIAPRAREQK).

Expressed by the venom gland.

It localises to the secreted. In terms of biological role, probable secreted venom toxin. This Chilobrachys guangxiensis (Chinese earth tiger tarantula) protein is U35-theraphotoxin-Cg1a.